Reading from the N-terminus, the 201-residue chain is dITP/XTP pyrophosphatase (201 aa).

8–13 (TTNENK) is a binding site for substrate. Asp68 serves as the catalytic Proton acceptor. Asp68 lines the Mg(2+) pocket. Substrate contacts are provided by residues Ser69, 155-158 (FGYD), Lys177, and 182-183 (HR).

Belongs to the HAM1 NTPase family. Homodimer. The cofactor is Mg(2+).

The catalysed reaction is XTP + H2O = XMP + diphosphate + H(+). It carries out the reaction dITP + H2O = dIMP + diphosphate + H(+). The enzyme catalyses ITP + H2O = IMP + diphosphate + H(+). Pyrophosphatase that catalyzes the hydrolysis of nucleoside triphosphates to their monophosphate derivatives, with a high preference for the non-canonical purine nucleotides XTP (xanthosine triphosphate), dITP (deoxyinosine triphosphate) and ITP. Seems to function as a house-cleaning enzyme that removes non-canonical purine nucleotides from the nucleotide pool, thus preventing their incorporation into DNA/RNA and avoiding chromosomal lesions. The chain is dITP/XTP pyrophosphatase from Borrelia garinii subsp. bavariensis (strain ATCC BAA-2496 / DSM 23469 / PBi) (Borreliella bavariensis).